Reading from the N-terminus, the 125-residue chain is uncharacterized protein (125 aa).

The 55-residue stretch at 19 to 73 (IYSLRLAKGLSRQQLAEVIDVTHQQLQKYEKAINRISVGRLVLIAEALDRNIDYF) folds into the HTH cro/C1-type domain. The H-T-H motif DNA-binding region spans 30 to 49 (RQQLAEVIDVTHQQLQKYEK).

This is an uncharacterized protein from Rickettsia conorii (strain ATCC VR-613 / Malish 7).